The following is a 199-amino-acid chain: MTSCGQQSLNVLAVLFSLLFSAVLSAHFRVCEPYTDHKGRYHFGFHCPRLSDNKTFILCCHHNNTVFKYCCNETEFQAVMQANLTASSEGYMHNNYTALLGVWIYGFFVLMLLVLDLLYYSAMNYDICKVYLARWGIQGRWMKQDPRRWGNPARAPRPGQRAPQPQPPPGPLPQAPQAVHTLRGDAHSPPLMTFQSSSA.

Positions 1–25 are cleaved as a signal peptide; it reads MTSCGQQSLNVLAVLFSLLFSAVLS. The Extracellular portion of the chain corresponds to 26-97; the sequence is AHFRVCEPYT…SEGYMHNNYT (72 aa). N-linked (GlcNAc...) asparagine glycosylation is found at Asn53 and Asn95. A helical transmembrane segment spans residues 98-118; the sequence is ALLGVWIYGFFVLMLLVLDLL. Residues 119–199 are Cytoplasmic-facing; it reads YYSAMNYDIC…PLMTFQSSSA (81 aa). The interval 146–199 is disordered; that stretch reads PRRWGNPARAPRPGQRAPQPQPPPGPLPQAPQAVHTLRGDAHSPPLMTFQSSSA. Low complexity predominate over residues 152 to 163; it reads PARAPRPGQRAP. Residues 164–174 show a composition bias toward pro residues; that stretch reads QPQPPPGPLPQ.

It belongs to the shisa family.

The protein resides in the membrane. This Homo sapiens (Human) protein is Protein shisa-like-1.